The following is a 614-amino-acid chain: FAD-dependent monooxygenase terD (614 aa).

The N-terminal stretch at 1–23 (MSSKFDVVICGSGTAGLAAATWL) is a signal peptide. Residues 6–35 (DVVICGSGTAGLAAATWLAQYGVDCKILES), Gln-44, Val-137, and 239–241 (RVY) contribute to the FAD site. An N-linked (GlcNAc...) asparagine glycan is attached at Asn-260. FAD-binding residues include Tyr-282 and Asp-303. A glycan (N-linked (GlcNAc...) asparagine) is linked at Asn-317. Ser-319 lines the FAD pocket. Asn-602 is a glycosylation site (N-linked (GlcNAc...) asparagine).

The protein belongs to the PheA/TfdB FAD monooxygenase family. The cofactor is FAD.

The protein operates within secondary metabolite biosynthesis. Functionally, FAD-dependent monooxygenase; part of the gene cluster that mediates the biosynthesis of terrein, a fungal metabolite with ecological, antimicrobial, antiproliferative, and antioxidative activities. The first step in the pathway is performed by the polyketide synthase terA that produces 4-hydroxy-6-methylpyranon (4-HMP), orsellinic acid (OA), and 2,3-dehydro-6-hydroxymellein (2,3-dehydro-6-HM) by condensing acetyl-CoA with two, three, or four malonyl-CoA units, respectively. 4-HMP and OA are not pathway intermediates, but are rather shunt or side products. 2,3-dehydro-6-HM is further converted to 6-hydroxymellein (6-HM) by the 6-hydroxymellein synthase terB. The monooxygenases terC and terD, the multicopper oxidase terE and the Kelch-like protein terF are then involved in the transformation of 6-HM to terrein. Even if they are co-regulated with the other terrein cluster genes, terH and terI seem to be dispensable for terrein production; whereas one or both of the 2 transporters terG and terJ are probably required for efficient secretion of metabolites. The sequence is that of FAD-dependent monooxygenase terD from Aspergillus terreus (strain NIH 2624 / FGSC A1156).